The following is a 320-amino-acid chain: Homoserine kinase (320 aa).

100–110 contributes to the ATP binding site; sequence PLSSGMGSSAA.

This sequence belongs to the GHMP kinase family. Homoserine kinase subfamily.

The protein localises to the cytoplasm. The catalysed reaction is L-homoserine + ATP = O-phospho-L-homoserine + ADP + H(+). Its pathway is amino-acid biosynthesis; L-threonine biosynthesis; L-threonine from L-aspartate: step 4/5. Its function is as follows. Catalyzes the ATP-dependent phosphorylation of L-homoserine to L-homoserine phosphate. The protein is Homoserine kinase of Chlorobium phaeovibrioides (strain DSM 265 / 1930) (Prosthecochloris vibrioformis (strain DSM 265)).